Here is a 346-residue protein sequence, read N- to C-terminus: N-acetyl-gamma-glutamyl-phosphate reductase (346 aa).

Cysteine 149 is a catalytic residue.

This sequence belongs to the NAGSA dehydrogenase family. Type 1 subfamily.

It is found in the cytoplasm. It catalyses the reaction N-acetyl-L-glutamate 5-semialdehyde + phosphate + NADP(+) = N-acetyl-L-glutamyl 5-phosphate + NADPH + H(+). It functions in the pathway amino-acid biosynthesis; L-arginine biosynthesis; N(2)-acetyl-L-ornithine from L-glutamate: step 3/4. In terms of biological role, catalyzes the NADPH-dependent reduction of N-acetyl-5-glutamyl phosphate to yield N-acetyl-L-glutamate 5-semialdehyde. This chain is N-acetyl-gamma-glutamyl-phosphate reductase, found in Micrococcus luteus (strain ATCC 4698 / DSM 20030 / JCM 1464 / CCM 169 / CCUG 5858 / IAM 1056 / NBRC 3333 / NCIMB 9278 / NCTC 2665 / VKM Ac-2230) (Micrococcus lysodeikticus).